We begin with the raw amino-acid sequence, 258 residues long: Indole-3-glycerol phosphate synthase (258 aa).

The protein belongs to the TrpC family.

The enzyme catalyses 1-(2-carboxyphenylamino)-1-deoxy-D-ribulose 5-phosphate + H(+) = (1S,2R)-1-C-(indol-3-yl)glycerol 3-phosphate + CO2 + H2O. It participates in amino-acid biosynthesis; L-tryptophan biosynthesis; L-tryptophan from chorismate: step 4/5. The sequence is that of Indole-3-glycerol phosphate synthase from Campylobacter jejuni subsp. doylei (strain ATCC BAA-1458 / RM4099 / 269.97).